The following is a 257-amino-acid chain: Imidazole glycerol phosphate synthase subunit HisF (257 aa).

Catalysis depends on residues D12 and D131.

The protein belongs to the HisA/HisF family. In terms of assembly, heterodimer of HisH and HisF.

The protein localises to the cytoplasm. The catalysed reaction is 5-[(5-phospho-1-deoxy-D-ribulos-1-ylimino)methylamino]-1-(5-phospho-beta-D-ribosyl)imidazole-4-carboxamide + L-glutamine = D-erythro-1-(imidazol-4-yl)glycerol 3-phosphate + 5-amino-1-(5-phospho-beta-D-ribosyl)imidazole-4-carboxamide + L-glutamate + H(+). The protein operates within amino-acid biosynthesis; L-histidine biosynthesis; L-histidine from 5-phospho-alpha-D-ribose 1-diphosphate: step 5/9. Functionally, IGPS catalyzes the conversion of PRFAR and glutamine to IGP, AICAR and glutamate. The HisF subunit catalyzes the cyclization activity that produces IGP and AICAR from PRFAR using the ammonia provided by the HisH subunit. The chain is Imidazole glycerol phosphate synthase subunit HisF from Paraburkholderia xenovorans (strain LB400).